Reading from the N-terminus, the 378-residue chain is Signal recognition particle receptor FtsY (378 aa).

Residues 184–191, 266–270, and 330–333 each bind GTP; these read GVNGTGKT, DTAGR, and TKLD.

The protein belongs to the GTP-binding SRP family. FtsY subfamily. In terms of assembly, part of the signal recognition particle protein translocation system, which is composed of SRP and FtsY. SRP is a ribonucleoprotein composed of Ffh and a 4.5S RNA molecule.

The protein localises to the cell membrane. It localises to the cytoplasm. It catalyses the reaction GTP + H2O = GDP + phosphate + H(+). In terms of biological role, involved in targeting and insertion of nascent membrane proteins into the cytoplasmic membrane. Acts as a receptor for the complex formed by the signal recognition particle (SRP) and the ribosome-nascent chain (RNC). Interaction with SRP-RNC leads to the transfer of the RNC complex to the Sec translocase for insertion into the membrane, the hydrolysis of GTP by both Ffh and FtsY, and the dissociation of the SRP-FtsY complex into the individual components. The polypeptide is Signal recognition particle receptor FtsY (Buchnera aphidicola subsp. Acyrthosiphon pisum (strain APS) (Acyrthosiphon pisum symbiotic bacterium)).